The primary structure comprises 891 residues: Protein SEY1 homolog (891 aa).

The Cytoplasmic segment spans residues 1–754 (MNLHLVDSDG…LRAAEAGNQR (754 aa)). The 267-residue stretch at 52–318 (GLNYHVVGVF…RCSDYLFSYH (267 aa)) folds into the GB1/RHD3-type G domain. Residue 62–69 (GGQSSGKS) coordinates GTP. A helical transmembrane segment spans residues 755–775 (LPAWVIPALFILGWNELLYVL). Topologically, residues 776–778 (TSP) are lumenal. Residues 779 to 799 (ALLVLVVVICAVFFRQFFVSQ) traverse the membrane as a helical segment. Residues 800-891 (WHAFEETGPA…MRHRTTHKLD (92 aa)) lie on the Cytoplasmic side of the membrane. A compositionally biased stretch (polar residues) spans 863 to 880 (STHADPAPSNTTVPTAQA). A disordered region spans residues 863–891 (STHADPAPSNTTVPTAQATMRHRTTHKLD). Residues 882-891 (MRHRTTHKLD) are compositionally biased toward basic residues.

This sequence belongs to the TRAFAC class dynamin-like GTPase superfamily. GB1/RHD3 GTPase family. RHD3 subfamily.

It localises to the endoplasmic reticulum membrane. Probable GTP-binding protein that may be involved in cell development. The protein is Protein SEY1 homolog of Leishmania braziliensis.